The sequence spans 179 residues: Cell division protein ZapC (179 aa).

It belongs to the ZapC family. As to quaternary structure, interacts directly with FtsZ.

The protein resides in the cytoplasm. Contributes to the efficiency of the cell division process by stabilizing the polymeric form of the cell division protein FtsZ. Acts by promoting interactions between FtsZ protofilaments and suppressing the GTPase activity of FtsZ. This is Cell division protein ZapC from Tolumonas auensis (strain DSM 9187 / NBRC 110442 / TA 4).